The primary structure comprises 300 residues: GTPase Era (300 aa).

Positions 8–176 (RCGYVAIVGR…ERLVAGRLPQ (169 aa)) constitute an Era-type G domain. The tract at residues 16 to 23 (GRPNVGKS) is G1. 16 to 23 (GRPNVGKS) lines the GTP pocket. Residues 42 to 46 (QTTRH) form a G2 region. The G3 stretch occupies residues 63-66 (DTPG). GTP is bound by residues 63–67 (DTPGL) and 125–128 (NKAD). The interval 125–128 (NKAD) is G4. A G5 region spans residues 155-157 (ISA). One can recognise a KH type-2 domain in the interval 199-283 (VREKIMRQLG…MLNLWVKVKG (85 aa)).

Belongs to the TRAFAC class TrmE-Era-EngA-EngB-Septin-like GTPase superfamily. Era GTPase family. As to quaternary structure, monomer.

It localises to the cytoplasm. The protein resides in the cell inner membrane. In terms of biological role, an essential GTPase that binds both GDP and GTP, with rapid nucleotide exchange. Plays a role in 16S rRNA processing and 30S ribosomal subunit biogenesis and possibly also in cell cycle regulation and energy metabolism. This Azotobacter vinelandii (strain DJ / ATCC BAA-1303) protein is GTPase Era.